A 1585-amino-acid chain; its full sequence is Sterol 3-beta-glucosyltransferase (1585 aa).

Residues 1–18 are compositionally biased toward pro residues; the sequence is MSPPISPTPPPLQPPFPP. Disordered regions lie at residues 1 to 151, 177 to 225, and 249 to 279; these read MSPP…ESSF, PWEE…PTHT, and YQYATPETSSRRTSAAGSESSSEGEVPLPKG. Composition is skewed to polar residues over residues 65–92, 105–123, and 132–148; these read DQATNSSNDSLIPSRQAPNQEETENAIT, DAQTVRFSSSSPASYSTHE, and PRTSSRAPNTASSQMAE. A compositionally biased stretch (acidic residues) spans 178-194; the sequence is WEEDDDSDDGEDDDEFI. The span at 255-273 shows a compositional bias: low complexity; sequence ETSSRRTSAAGSESSSEGE. One can recognise a GRAM 1 domain in the interval 387 to 555; it reads ERLMEVFGLE…EAIVDVEKSP (169 aa). The PH domain occupies 438–530; that stretch reads LLVKSGPLHK…WVKAIQKVMF (93 aa). Disordered stretches follow at residues 625 to 645 and 666 to 852; these read TSHATIKRHGTDSSAEKLGMA and DGEP…GSES. A compositionally biased stretch (basic and acidic residues) spans 670–689; the sequence is LEEHSQGPHHNDEDASHLPH. Composition is skewed to polar residues over residues 760-785, 806-817, and 827-840; these read TDSSTTVTESGPSLRSRTGRTKQASV, NKPSVVDSNSAE, and SWTSETSSGSQMVK. The region spanning 862-933 is the GRAM 2 domain; that stretch reads RKFRTFFALS…RDLYGLKAQK (72 aa). UDP-alpha-D-glucose-binding residues include Ser1043, Arg1044, Asp1046, Ile1358, His1360, His1373, Gly1377, Thr1378, Asp1397, and Gln1398. A disordered region spans residues 1499–1552; that stretch reads NRVRSRSRSRSRSSQGRFSPRRHTVDDDGWSVVSGGSRSRSGSASAVTSPERRP. Positions 1529-1545 are enriched in low complexity; it reads SVVSGGSRSRSGSASAV.

Belongs to the glycosyltransferase 28 family.

The protein resides in the cytoplasm. It localises to the membrane. The enzyme catalyses a sterol + UDP-alpha-D-glucose = a sterol 3-beta-D-glucoside + UDP + H(+). The catalysed reaction is ergosterol + UDP-alpha-D-glucose = ergosteryl 3-beta-D-glucoside + UDP + H(+). Its function is as follows. Sterol glycosyltransferase responsible for the glycosylation of ergosterol to form ergosterol-glucoside. This Cryptococcus neoformans var. neoformans serotype D (strain B-3501A) (Filobasidiella neoformans) protein is Sterol 3-beta-glucosyltransferase.